Here is a 29-residue protein sequence, read N- to C-terminus: Varv peptide F (29 aa).

The cyclopeptide (Gly-Asn) cross-link spans 1 to 29; sequence GVPICGETCTLGTCYTAGCSCSWPVCTRN. Disulfide bonds link Cys5–Cys19, Cys9–Cys21, and Cys14–Cys26.

Post-translationally, this is a cyclic peptide.

Its function is as follows. Probably participates in a plant defense mechanism. Has cytotoxic activity against a variety of drug-resistant and drug-sensitive human tumor cell lines. The protein is Varv peptide F of Viola arvensis (European field pansy).